The following is a 269-amino-acid chain: MGSVNFITHADVLQLIAKRTAEDCIIFLSGPTSRKTPLSLLRMKDVIAVNGSVQYLLNNNVKPFLYLLTDIRFLHRRREDFYNFSRNSQFTIVNLDVYEQASVDDQKYIEENCLIIRSFYRREKGGFLKKIKFNILKRVHKALLISVPLSKRGRLAGFCKDISIGYCSCHTIAYTAIQVAYSLKYGRIICSGLDLTGSCPRFYDESTSPMPSELSKDLFKILPFFTFMRKNVSDLNIFNLSDDTAIHYDIIPYITASELEDEIYYDKIV.

The protein resides in the cytoplasm. The catalysed reaction is an alpha-Kdo-(2-&gt;4)-alpha-Kdo-(2-&gt;6)-lipid IVA + CMP-3-deoxy-beta-D-manno-octulosonate = an alpha-Kdo-(2-&gt;4)-alpha-Kdo-(2-&gt;4)-alpha-Kdo-(2-&gt;6)-lipid IVA + CMP + H(+). Its pathway is bacterial outer membrane biogenesis; LPS core biosynthesis. In terms of biological role, involved in the biosynthesis of the core oligosaccharide region of lipopolysaccharide (LPS). Required for the addition of 3-deoxy-D-manno-oct-2-ulosonic acid III (KdoIII) to the KdoII residue of the inner lipopolysaccharide core. The protein is Probable 3-deoxy-manno-octulosonic acid transferase of Salmonella typhimurium (strain LT2 / SGSC1412 / ATCC 700720).